A 158-amino-acid chain; its full sequence is SsrA-binding protein (158 aa).

Positions 135–158 (DKRKTLKDRDWERDKQRGFKKDLD) are disordered. Residues 141–158 (KDRDWERDKQRGFKKDLD) are compositionally biased toward basic and acidic residues.

This sequence belongs to the SmpB family.

It localises to the cytoplasm. Its function is as follows. Required for rescue of stalled ribosomes mediated by trans-translation. Binds to transfer-messenger RNA (tmRNA), required for stable association of tmRNA with ribosomes. tmRNA and SmpB together mimic tRNA shape, replacing the anticodon stem-loop with SmpB. tmRNA is encoded by the ssrA gene; the 2 termini fold to resemble tRNA(Ala) and it encodes a 'tag peptide', a short internal open reading frame. During trans-translation Ala-aminoacylated tmRNA acts like a tRNA, entering the A-site of stalled ribosomes, displacing the stalled mRNA. The ribosome then switches to translate the ORF on the tmRNA; the nascent peptide is terminated with the 'tag peptide' encoded by the tmRNA and targeted for degradation. The ribosome is freed to recommence translation, which seems to be the essential function of trans-translation. This Psychrobacter cryohalolentis (strain ATCC BAA-1226 / DSM 17306 / VKM B-2378 / K5) protein is SsrA-binding protein.